The following is a 483-amino-acid chain: Glycogen synthase (483 aa).

Lys-18 is an ADP-alpha-D-glucose binding site.

This sequence belongs to the glycosyltransferase 1 family. Bacterial/plant glycogen synthase subfamily.

The catalysed reaction is [(1-&gt;4)-alpha-D-glucosyl](n) + ADP-alpha-D-glucose = [(1-&gt;4)-alpha-D-glucosyl](n+1) + ADP + H(+). The protein operates within glycan biosynthesis; glycogen biosynthesis. Functionally, synthesizes alpha-1,4-glucan chains using ADP-glucose. This is Glycogen synthase from Rhodopseudomonas palustris (strain TIE-1).